A 363-amino-acid polypeptide reads, in one-letter code: 2,5-diketocamphane 1,2-monooxygenase 1 (363 aa).

FMN-binding positions include Met-74 and 186–194 (TGLTKNSSS).

The protein belongs to the bacterial luciferase oxidoreductase family. Homodimer. Likely forms a loose transient complex with a P.putida flavin reductase that provides the required FMNH(2) to the enzyme.

The catalysed reaction is (1R,4R)-bornane-2,5-dione + FMNH2 + O2 = (1R,4R)-5-oxo-1,2-campholide + FMN + H2O + H(+). The protein operates within terpene metabolism; (R)-camphor degradation. Its function is as follows. Involved in the degradation and assimilation of (+)-camphor, which allows P.putida strain NCIMB 10007 to grow on this enantiomer of camphor as the sole carbon source. Catalyzes the FMNH(2)-dependent lactonization of 2,5-diketocamphane via a Baeyer-Villiger oxidation to produce the unstable lactone 5-oxo-1,2-campholide with (R,R) configuration, that presumably undergoes spontaneous hydrolysis to form 2-oxo-Delta(3)-4,5,5-trimethylcyclopentenylacetate. Is also able to convert (+)-camphor and norcamphor to the corresponding lactone in vitro. Shows no conversion of (-)-camphor, (+)-fenchone, (-)-fenchone, and (+)-nopinone. Acts only on bicyclic ketones; is not active towards monocyclic ketones, aromatic ketones, the aliphatic 2-decanone, 1-indanone and progesterone. The sequence is that of 2,5-diketocamphane 1,2-monooxygenase 1 from Pseudomonas putida (Arthrobacter siderocapsulatus).